Here is a 480-residue protein sequence, read N- to C-terminus: Beta-amyrin 28-monooxygenase (480 aa).

The helical transmembrane segment at Val3–Leu23 threads the bilayer. Cys427 serves as a coordination point for heme.

Belongs to the cytochrome P450 family. Heme is required as a cofactor. In terms of tissue distribution, expressed in leaves, stems and fruit skin.

Its subcellular location is the membrane. The enzyme catalyses beta-amyrin + 3 reduced [NADPH--hemoprotein reductase] + 3 O2 = oleanolate + 3 oxidized [NADPH--hemoprotein reductase] + 4 H2O + 4 H(+). In terms of biological role, catalyzes the carboxylation of beta-amyrin at the C-28 position to form oleanolic acid. May be involved in saponin biosynthesis in fruit skin. The sequence is that of Beta-amyrin 28-monooxygenase from Vitis vinifera (Grape).